Here is a 281-residue protein sequence, read N- to C-terminus: uncharacterized protein (281 aa).

Residues 1 to 30 are disordered; sequence MVQIQFHQGEPLGHKKEKPPPVSPPSPPPI. Pro residues predominate over residues 20–30; it reads PPVSPPSPPPI. 7 helical membrane-spanning segments follow: residues 58-78, 88-107, 117-137, 145-165, 171-191, 196-216, and 248-268; these read TVVF…LIPW, TLPF…AYWL, MLVM…GLCF, AYVL…LMAW, LAIL…IAVQ, YQRI…IVLI, and VIMF…PNYA.

The protein belongs to the cytomegalovirus US12 family.

The protein localises to the host membrane. This is an uncharacterized protein from Homo sapiens (Human).